A 176-amino-acid polypeptide reads, in one-letter code: Sperm-egg fusion protein TMEM95 (176 aa).

The N-terminal stretch at 1–16 (MWVLALGGAFLAVAKA) is a signal peptide. Disulfide bonds link Cys-17–Cys-119, Cys-20–Cys-122, Cys-106–Cys-129, and Cys-110–Cys-135. Residues 17-146 (CIFCRLQDHA…PDSHDLWDAR (130 aa)) lie on the Extracellular side of the membrane. N-linked (GlcNAc...) asparagine glycans are attached at residues Asn-36 and Asn-118. The helical transmembrane segment at 147–167 (ILLLCIFGIVLLSGVVSLQVE) threads the bilayer. Over 168–176 (YLNLQAKDL) the chain is Cytoplasmic.

It belongs to the TMEM95 family. Does not interact with sperm-egg fusion proteins IZUMO1 or IZUMO1R/JUNO. Post-translationally, N-glycosylated. Expressed exclusively in testis.

The protein resides in the cytoplasmic vesicle. The protein localises to the secretory vesicle. It localises to the acrosome membrane. Functionally, sperm protein required for fusion of sperm with the egg membrane during fertilization. The protein is Sperm-egg fusion protein TMEM95 of Mus musculus (Mouse).